The sequence spans 577 residues: Probable L-gulonolactone oxidase 4 (577 aa).

A signal peptide spans 1 to 17; the sequence is MSFWLSLIFCFFTFASS. Residues 46–228 form the FAD-binding PCMH-type domain; the sequence is SICKAAKVEY…SQVTFELQPM (183 aa).

It belongs to the oxygen-dependent FAD-linked oxidoreductase family. FAD serves as cofactor.

The catalysed reaction is L-gulono-1,4-lactone + O2 = L-ascorbate + H2O2 + H(+). Its pathway is cofactor biosynthesis; L-ascorbate biosynthesis. Its function is as follows. May be involved in the biosynthesis of ascorbic acid. This is Probable L-gulonolactone oxidase 4 from Arabidopsis thaliana (Mouse-ear cress).